We begin with the raw amino-acid sequence, 671 residues long: DNA ligase (671 aa).

NAD(+) contacts are provided by residues Asp37–Asp41, Ser86–Leu87, and Glu117. Lys119 acts as the N6-AMP-lysine intermediate in catalysis. Residues Arg140, Glu177, Lys295, and Lys319 each contribute to the NAD(+) site. Zn(2+) contacts are provided by Cys413, Cys416, Cys431, and Cys437. A BRCT domain is found at Ile594–Lys671.

This sequence belongs to the NAD-dependent DNA ligase family. LigA subfamily. Mg(2+) is required as a cofactor. The cofactor is Mn(2+).

It catalyses the reaction NAD(+) + (deoxyribonucleotide)n-3'-hydroxyl + 5'-phospho-(deoxyribonucleotide)m = (deoxyribonucleotide)n+m + AMP + beta-nicotinamide D-nucleotide.. Functionally, DNA ligase that catalyzes the formation of phosphodiester linkages between 5'-phosphoryl and 3'-hydroxyl groups in double-stranded DNA using NAD as a coenzyme and as the energy source for the reaction. It is essential for DNA replication and repair of damaged DNA. The sequence is that of DNA ligase from Polynucleobacter asymbioticus (strain DSM 18221 / CIP 109841 / QLW-P1DMWA-1) (Polynucleobacter necessarius subsp. asymbioticus).